The chain runs to 156 residues: Small ribosomal subunit protein uS7 (156 aa).

It belongs to the universal ribosomal protein uS7 family. Part of the 30S ribosomal subunit. Contacts proteins S9 and S11.

In terms of biological role, one of the primary rRNA binding proteins, it binds directly to 16S rRNA where it nucleates assembly of the head domain of the 30S subunit. Is located at the subunit interface close to the decoding center, probably blocks exit of the E-site tRNA. This Kineococcus radiotolerans (strain ATCC BAA-149 / DSM 14245 / SRS30216) protein is Small ribosomal subunit protein uS7.